Reading from the N-terminus, the 230-residue chain is Large ribosomal subunit protein uL1 (230 aa).

This sequence belongs to the universal ribosomal protein uL1 family. As to quaternary structure, part of the 50S ribosomal subunit.

In terms of biological role, binds directly to 23S rRNA. The L1 stalk is quite mobile in the ribosome, and is involved in E site tRNA release. Functionally, protein L1 is also a translational repressor protein, it controls the translation of the L11 operon by binding to its mRNA. This Leuconostoc mesenteroides subsp. mesenteroides (strain ATCC 8293 / DSM 20343 / BCRC 11652 / CCM 1803 / JCM 6124 / NCDO 523 / NBRC 100496 / NCIMB 8023 / NCTC 12954 / NRRL B-1118 / 37Y) protein is Large ribosomal subunit protein uL1.